The sequence spans 463 residues: Probable cysteine protease RD21B (463 aa).

The first 21 residues, 1 to 21 (MGFLKLSPMILLLAMIGVSYA), serve as a signal peptide directing secretion. Positions 22–137 (MDMSIISYDE…DRYQARVGDA (116 aa)) are cleaved as a propeptide — activation peptide. Asn92 is a glycosylation site (N-linked (GlcNAc...) asparagine). Cystine bridges form between Cys159–Cys201, Cys193–Cys234, Cys292–Cys343, Cys376–Cys388, and Cys382–Cys403. Residue Cys162 is part of the active site. Catalysis depends on residues His298 and Asn318. The propeptide at 354–463 (KKGQNPPNPG…FWAKSRKHIA (110 aa)) is removed in mature form. An N-linked (GlcNAc...) asparagine glycan is attached at Asn415.

The protein belongs to the peptidase C1 family. As to quaternary structure, interacts with PRN2. Interacts with WSCP.

Functionally, probable thiol protease. The sequence is that of Probable cysteine protease RD21B from Arabidopsis thaliana (Mouse-ear cress).